A 187-amino-acid polypeptide reads, in one-letter code: Peptide deformylase (187 aa).

Fe cation-binding residues include C94 and H136. Residue E137 is part of the active site. H140 is a binding site for Fe cation.

It belongs to the polypeptide deformylase family. Fe(2+) is required as a cofactor.

It catalyses the reaction N-terminal N-formyl-L-methionyl-[peptide] + H2O = N-terminal L-methionyl-[peptide] + formate. In terms of biological role, removes the formyl group from the N-terminal Met of newly synthesized proteins. Requires at least a dipeptide for an efficient rate of reaction. N-terminal L-methionine is a prerequisite for activity but the enzyme has broad specificity at other positions. This is Peptide deformylase from Chlorobaculum tepidum (strain ATCC 49652 / DSM 12025 / NBRC 103806 / TLS) (Chlorobium tepidum).